We begin with the raw amino-acid sequence, 431 residues long: Histidinol dehydrogenase (431 aa).

NAD(+)-binding residues include Tyr-130, Gln-191, and Asn-214. Residues Ser-237, Gln-259, and His-262 each coordinate substrate. Residues Gln-259 and His-262 each coordinate Zn(2+). Catalysis depends on proton acceptor residues Glu-327 and His-328. Substrate contacts are provided by His-328, Asp-361, Glu-415, and His-420. Asp-361 serves as a coordination point for Zn(2+). His-420 is a Zn(2+) binding site.

The protein belongs to the histidinol dehydrogenase family. Requires Zn(2+) as cofactor.

The enzyme catalyses L-histidinol + 2 NAD(+) + H2O = L-histidine + 2 NADH + 3 H(+). The protein operates within amino-acid biosynthesis; L-histidine biosynthesis; L-histidine from 5-phospho-alpha-D-ribose 1-diphosphate: step 9/9. Catalyzes the sequential NAD-dependent oxidations of L-histidinol to L-histidinaldehyde and then to L-histidine. This Syntrophotalea carbinolica (strain DSM 2380 / NBRC 103641 / GraBd1) (Pelobacter carbinolicus) protein is Histidinol dehydrogenase.